Consider the following 180-residue polypeptide: Pro-glucagon (180 aa).

The signal sequence occupies residues 1–20 (MKSLYFVAGLFVMLVQGSWQ). A compositionally biased stretch (polar residues) spans 25-35 (NTEEKSSSFPA). The tract at residues 25-59 (NTEEKSSSFPAPQTDPLGDPDQINEDKRHSQGTFT) is disordered. At Ser54 the chain carries Phosphoserine. The propeptide occupies 84–89 (NKNNIA). A phosphoserine mark is found at Ser105 and Ser108. Arg127 bears the Arginine amide mark. A propeptide spanning residues 131–145 (DFPEEVNIVEELRRR) is cleaved from the precursor. Ser150 and Ser152 each carry phosphoserine.

Belongs to the glucagon family. Proglucagon is post-translationally processed in a tissue-specific manner in pancreatic A cells and intestinal L cells. In pancreatic A cells, the major bioactive hormone is glucagon cleaved by PCSK2/PC2. In the intestinal L cells PCSK1/PC1 liberates GLP-1, GLP-2, glicentin and oxyntomodulin. GLP-1 is further N-terminally truncated by post-translational processing in the intestinal L cells resulting in GLP-1(7-37) GLP-1-(7-36)amide. The C-terminal amidation is neither important for the metabolism of GLP-1 nor for its effects on the endocrine pancreas. In terms of tissue distribution, glucagon is secreted in the A cells of the islets of Langerhans. GLP-1, GLP-2, oxyntomodulin and glicentin are secreted from enteroendocrine cells throughout the gastrointestinal tract.

The protein localises to the secreted. Functionally, plays a key role in glucose metabolism and homeostasis. Regulates blood glucose by increasing gluconeogenesis and decreasing glycolysis. A counterregulatory hormone of insulin, raises plasma glucose levels in response to insulin-induced hypoglycemia. Plays an important role in initiating and maintaining hyperglycemic conditions in diabetes. Its function is as follows. Potent stimulator of glucose-dependent insulin release. Also stimulates insulin release in response to IL6. Plays important roles on gastric motility and the suppression of plasma glucagon levels. May be involved in the suppression of satiety and stimulation of glucose disposal in peripheral tissues, independent of the actions of insulin. Has growth-promoting activities on intestinal epithelium. May also regulate the hypothalamic pituitary axis (HPA) via effects on LH, TSH, CRH, oxytocin, and vasopressin secretion. Increases islet mass through stimulation of islet neogenesis and pancreatic beta cell proliferation. Inhibits beta cell apoptosis. In terms of biological role, stimulates intestinal growth and up-regulates villus height in the small intestine, concomitant with increased crypt cell proliferation and decreased enterocyte apoptosis. The gastrointestinal tract, from the stomach to the colon is the principal target for GLP-2 action. Plays a key role in nutrient homeostasis, enhancing nutrient assimilation through enhanced gastrointestinal function, as well as increasing nutrient disposal. Stimulates intestinal glucose transport and decreases mucosal permeability. Significantly reduces food intake. Inhibits gastric emptying in humans. Suppression of gastric emptying may lead to increased gastric distension, which may contribute to satiety by causing a sensation of fullness. Functionally, may modulate gastric acid secretion and the gastro-pyloro-duodenal activity. May play an important role in intestinal mucosal growth in the early period of life. The protein is Pro-glucagon (GCG) of Bos taurus (Bovine).